Consider the following 241-residue polypeptide: GTP cyclohydrolase III (241 aa).

Belongs to the archaeal-type GTP cyclohydrolase family.

It catalyses the reaction GTP + 3 H2O = 2-amino-5-formylamino-6-(5-phospho-D-ribosylamino)pyrimidin-4(3H)-one + 2 phosphate + 2 H(+). In terms of biological role, catalyzes the formation of 2-amino-5-formylamino-6-ribofuranosylamino-4(3H)-pyrimidinone ribonucleotide monophosphate and inorganic phosphate from GTP. Also has an independent pyrophosphate phosphohydrolase activity. In Aeropyrum pernix (strain ATCC 700893 / DSM 11879 / JCM 9820 / NBRC 100138 / K1), this protein is GTP cyclohydrolase III.